Here is an 812-residue protein sequence, read N- to C-terminus: Conserved oligomeric Golgi complex subunit 6 (812 aa).

A compositionally biased stretch (low complexity) spans 77-96; sequence SHASTRTPSPAASPLSPPAT. 2 disordered regions span residues 77-100 and 665-688; these read SHAS…QRSS and SVAK…PQQQ. Basic and acidic residues predominate over residues 671–680; sequence TETEKQDSHP.

It belongs to the COG6 family.

Its subcellular location is the golgi apparatus membrane. Its function is as follows. Acts as a component of the peripheral membrane COG complex that is involved in intra-Golgi protein trafficking. COG is located at the cis-Golgi, and regulates tethering of retrograde intra-Golgi vesicles and possibly a number of other membrane trafficking events. The protein is Conserved oligomeric Golgi complex subunit 6 (cog6) of Aspergillus oryzae (strain ATCC 42149 / RIB 40) (Yellow koji mold).